A 328-amino-acid chain; its full sequence is tRNA-modifying protein YgfZ (328 aa).

Residues Trp28 and Trp190 each contribute to the folate site.

It belongs to the tRNA-modifying YgfZ family.

Its subcellular location is the cytoplasm. Its function is as follows. Folate-binding protein involved in regulating the level of ATP-DnaA and in the modification of some tRNAs. It is probably a key factor in regulatory networks that act via tRNA modification, such as initiation of chromosomal replication. In Sodalis glossinidius (strain morsitans), this protein is tRNA-modifying protein YgfZ.